Consider the following 571-residue polypeptide: Urease subunit alpha (571 aa).

In terms of domain architecture, Urease spans 133-571 (GGIDTHVHFI…LPLTQRYFLF (439 aa)). 3 residues coordinate Ni(2+): His138, His140, and Lys221. An N6-carboxylysine modification is found at Lys221. His223 lines the substrate pocket. Ni(2+) is bound by residues His250 and His276. Catalysis depends on His324, which acts as the Proton donor. Ni(2+) is bound at residue Asp364.

This sequence belongs to the metallo-dependent hydrolases superfamily. Urease alpha subunit family. Heterotrimer of UreA (gamma), UreB (beta) and UreC (alpha) subunits. Three heterotrimers associate to form the active enzyme. It depends on Ni cation as a cofactor. Carboxylation allows a single lysine to coordinate two nickel ions.

The protein resides in the cytoplasm. The catalysed reaction is urea + 2 H2O + H(+) = hydrogencarbonate + 2 NH4(+). Its pathway is nitrogen metabolism; urea degradation; CO(2) and NH(3) from urea (urease route): step 1/1. The polypeptide is Urease subunit alpha (Staphylococcus aureus (strain MRSA252)).